The following is a 377-amino-acid chain: Chaperone protein DnaJ (377 aa).

The J domain maps to 5-70 (DYYEVLGVGR…NKKAAYDQFG (66 aa)). The CR-type zinc-finger motif lies at 133 to 211 (GLTKELRIPT…CHGDGRVEKT (79 aa)). Residues Cys146, Cys149, Cys163, Cys166, Cys185, Cys188, Cys199, and Cys202 each coordinate Zn(2+). CXXCXGXG motif repeat units follow at residues 146-153 (CDVCDGSG), 163-170 (CGTCHGQG), 185-192 (CPTCHGRG), and 199-206 (CSKCHGDG).

This sequence belongs to the DnaJ family. As to quaternary structure, homodimer. Zn(2+) is required as a cofactor.

The protein resides in the cytoplasm. Functionally, participates actively in the response to hyperosmotic and heat shock by preventing the aggregation of stress-denatured proteins and by disaggregating proteins, also in an autonomous, DnaK-independent fashion. Unfolded proteins bind initially to DnaJ; upon interaction with the DnaJ-bound protein, DnaK hydrolyzes its bound ATP, resulting in the formation of a stable complex. GrpE releases ADP from DnaK; ATP binding to DnaK triggers the release of the substrate protein, thus completing the reaction cycle. Several rounds of ATP-dependent interactions between DnaJ, DnaK and GrpE are required for fully efficient folding. Also involved, together with DnaK and GrpE, in the DNA replication of plasmids through activation of initiation proteins. This chain is Chaperone protein DnaJ, found in Shewanella sp. (strain ANA-3).